Consider the following 200-residue polypeptide: MIGRISSKTTALFICDIQTSFLKTVTQIEELIINNKSLMDSCLEFKIPIIMTQHDKNLFGEIVEPLRYSSSSSSSLSNVMVFDKIAYSMYTKELAQYVKENLPNLKSVILTGLESHVCVLQTALDLLENGYEVHVIDDATTSVQPKEYKSSLKRMKQSGVFLTSTETVIYQILQSDNHPKFKKIDELIVKRLFQINNINK.

This sequence belongs to the isochorismatase family.

This is Isochorismatase family protein 2A from Dictyostelium discoideum (Social amoeba).